The following is a 278-amino-acid chain: 4-deoxy-L-threo-5-hexosulose-uronate ketol-isomerase (278 aa).

The Zn(2+) site is built by His-196, His-198, Glu-203, and His-245.

This sequence belongs to the KduI family. Homohexamer. Zn(2+) serves as cofactor.

The catalysed reaction is 5-dehydro-4-deoxy-D-glucuronate = 3-deoxy-D-glycero-2,5-hexodiulosonate. The protein operates within glycan metabolism; pectin degradation; 2-dehydro-3-deoxy-D-gluconate from pectin: step 4/5. Catalyzes the isomerization of 5-dehydro-4-deoxy-D-glucuronate to 3-deoxy-D-glycero-2,5-hexodiulosonate. This is 4-deoxy-L-threo-5-hexosulose-uronate ketol-isomerase from Escherichia coli O127:H6 (strain E2348/69 / EPEC).